We begin with the raw amino-acid sequence, 245 residues long: tRNA (guanine-N(1)-)-methyltransferase (245 aa).

S-adenosyl-L-methionine-binding positions include Gly114 and 133 to 138; that span reads IGDYVL.

It belongs to the RNA methyltransferase TrmD family. In terms of assembly, homodimer.

Its subcellular location is the cytoplasm. It catalyses the reaction guanosine(37) in tRNA + S-adenosyl-L-methionine = N(1)-methylguanosine(37) in tRNA + S-adenosyl-L-homocysteine + H(+). Specifically methylates guanosine-37 in various tRNAs. This Prochlorococcus marinus (strain MIT 9312) protein is tRNA (guanine-N(1)-)-methyltransferase.